The primary structure comprises 191 residues: uncharacterized protein (191 aa).

The Fe2OG dioxygenase domain occupies 87-184 (EFDSALIFHY…RIAITFRQMG (98 aa)).

This is an uncharacterized protein from Acanthamoeba polyphaga mimivirus (APMV).